The sequence spans 399 residues: uncharacterized protein (399 aa).

Transmembrane regions (helical) follow at residues 6 to 26, 27 to 47, 60 to 80, 111 to 131, 147 to 167, 173 to 193, 195 to 215, 220 to 240, 328 to 348, and 362 to 382; these read HLTF…LIIP, KGYN…FIPL, LIFS…INKD, ILYA…FQKF, MGNI…HFFI, STLF…LSGA, GGWI…KEFI, IITL…SPKF, GLVG…YFIK, and ILGI…SFLA.

Its subcellular location is the cell membrane. This is an uncharacterized protein from Haemophilus influenzae (strain ATCC 51907 / DSM 11121 / KW20 / Rd).